Consider the following 433-residue polypeptide: tRNA-2-methylthio-N(6)-dimethylallyladenosine synthase (433 aa).

Positions 3–118 (KKLFIQTLGC…ITKAVNTPKF (116 aa)) constitute an MTTase N-terminal domain. The [4Fe-4S] cluster site is built by Cys12, Cys49, Cys81, Cys150, Cys154, and Cys157. The 234-residue stretch at 136-369 (RGSPYKSHIN…QNRHSEILDE (234 aa)) folds into the Radical SAM core domain. A TRAM domain is found at 372 to 433 (AAQKDKIFDV…RMVLYGELQI (62 aa)).

This sequence belongs to the methylthiotransferase family. MiaB subfamily. As to quaternary structure, monomer. [4Fe-4S] cluster is required as a cofactor.

The protein resides in the cytoplasm. The enzyme catalyses N(6)-dimethylallyladenosine(37) in tRNA + (sulfur carrier)-SH + AH2 + 2 S-adenosyl-L-methionine = 2-methylsulfanyl-N(6)-dimethylallyladenosine(37) in tRNA + (sulfur carrier)-H + 5'-deoxyadenosine + L-methionine + A + S-adenosyl-L-homocysteine + 2 H(+). In terms of biological role, catalyzes the methylthiolation of N6-(dimethylallyl)adenosine (i(6)A), leading to the formation of 2-methylthio-N6-(dimethylallyl)adenosine (ms(2)i(6)A) at position 37 in tRNAs that read codons beginning with uridine. In Campylobacter concisus (strain 13826), this protein is tRNA-2-methylthio-N(6)-dimethylallyladenosine synthase.